A 285-amino-acid chain; its full sequence is MIVCKIPEEVLDQVRLWKAQGKRIGFVPTMGFLHEGHAYLFEECISKADKTVVSIFVNPAQFNDPEDYAKYPVNTEGDLKLCESKKVDLVFLPDKETIYPDGIPDIVLKIPNLMKSLCAVSRPGHFEGVLLVISRLFHFVQPDFAFFGKKDYQQYLLIREFCNTLAFPIEVIGCETVRSSQGLALSSRNSRLSETEKEESLLIYRSLKLGENQIFSGIKNPLLVKEIMKDVLDSSSKIRLDYLEILNADTLDPLEVLEGEILLAIAAFIGPVRLIDNLTLSVPIS.

30–37 (MGFLHEGH) is a binding site for ATP. The active-site Proton donor is the H37. Residue Q61 participates in (R)-pantoate binding. Q61 contributes to the beta-alanine binding site. 148–151 (GKKD) lines the ATP pocket. Q154 serves as a coordination point for (R)-pantoate. Residues V177 and 185–188 (LSSR) each bind ATP.

It belongs to the pantothenate synthetase family. Homodimer.

The protein localises to the cytoplasm. The enzyme catalyses (R)-pantoate + beta-alanine + ATP = (R)-pantothenate + AMP + diphosphate + H(+). It functions in the pathway cofactor biosynthesis; (R)-pantothenate biosynthesis; (R)-pantothenate from (R)-pantoate and beta-alanine: step 1/1. Functionally, catalyzes the condensation of pantoate with beta-alanine in an ATP-dependent reaction via a pantoyl-adenylate intermediate. The polypeptide is Pantothenate synthetase (Leptospira interrogans serogroup Icterohaemorrhagiae serovar copenhageni (strain Fiocruz L1-130)).